Reading from the N-terminus, the 344-residue chain is Anthranilate phosphoribosyltransferase (344 aa).

5-phospho-alpha-D-ribose 1-diphosphate-binding positions include glycine 80, 83–84, threonine 88, 90–93, 108–116, and serine 120; these read GD, NVST, and KHGNRSVSS. Glycine 80 contacts anthranilate. Serine 92 is a binding site for Mg(2+). Residue asparagine 111 participates in anthranilate binding. Arginine 166 is an anthranilate binding site. Mg(2+)-binding residues include aspartate 225 and glutamate 226.

It belongs to the anthranilate phosphoribosyltransferase family. As to quaternary structure, homodimer. Requires Mg(2+) as cofactor.

It catalyses the reaction N-(5-phospho-beta-D-ribosyl)anthranilate + diphosphate = 5-phospho-alpha-D-ribose 1-diphosphate + anthranilate. It participates in amino-acid biosynthesis; L-tryptophan biosynthesis; L-tryptophan from chorismate: step 2/5. Functionally, catalyzes the transfer of the phosphoribosyl group of 5-phosphorylribose-1-pyrophosphate (PRPP) to anthranilate to yield N-(5'-phosphoribosyl)-anthranilate (PRA). The chain is Anthranilate phosphoribosyltransferase from Legionella pneumophila (strain Corby).